Here is a 29-residue protein sequence, read N- to C-terminus: MKTKFVFDLLTPDDILHPSNHVNLIIRPI.

This sequence belongs to the coronaviruses ns4.9 protein family.

This chain is Truncated non-structural protein of 4.9 kDa, found in Bovine coronavirus (strain 98TXSF-110-ENT) (BCoV-ENT).